We begin with the raw amino-acid sequence, 252 residues long: Protein AGAMOUS-LIKE 6 (252 aa).

Positions 1–61 (MGRGRVELKR…GKLYEFGSAG (61 aa)) constitute an MADS-box domain. 2 short sequence motifs (nuclear localization signal) span residues 8-15 (LKRIENKI) and 138-145 (QRKTQIMM). Residues 85–175 (TQSWYQEVSK…KIKVSLELSS (91 aa)) form the K-box domain.

In terms of tissue distribution, restricted to flowers.

The protein localises to the nucleus. Functionally, probable transcription factor involved in fruit development. Key regulator of the transition between the state of 'ovary arrest' imposed towards anthesis and the fertilization-triggered fruit set. This Solanum lycopersicum (Tomato) protein is Protein AGAMOUS-LIKE 6.